The following is a 504-amino-acid chain: Terminase, large subunit (504 aa).

Positions 1–204 (MTRGERVIAF…LSIWIDDAVK (204 aa)) are ATPase activity. The Walker A motif motif lies at 54–61 (IARKNGKT). The Walker B motif motif lies at 149-154 (LAILDE). The nuclease activity stretch occupies residues 326–415 (FPFFWTPQKT…LPLVEFGQGF (90 aa)). Asp-471 is a binding site for Mg(2+).

This sequence belongs to the Hendrixvirinae large terminase family. As to quaternary structure, homopentamer; forms a ring-like structure through which genomic DNA is translocated into the capsid. Interacts with the terminase small subunit; the active complex is composed of a pentamer ring of terminase large subunits and a nonamer ring of terminase small subunits. Interacts with the portal protein; this interaction allows the packaging of viral DNA. Mg(2+) is required as a cofactor. Requires Mn(2+) as cofactor.

Inhibited by zinc. In terms of biological role, the terminase large subunit acts as an ATP driven molecular motor necessary for viral DNA translocation into empty capsids and as an endonuclease that cuts the viral genome from the concetamer to initiate and to end a packaging reaction. The terminase lies at a unique vertex of the procapsid and is composed of two subunits, a small terminase subunit involved in viral DNA recognition (packaging sequence), and a large terminase subunit possessing endonucleolytic and ATPase activities. Both terminase subunits heterooligomerize and are docked on the portal protein to form the packaging machine. Packaging initiates by TerS recognizing the packaging sequence in the viral DNA. The nuclease activity of TerL cuts the viral DNA and the terminase-DNA complex binds to the portal of a procapsid shell. DNA is translocated into the capsid, powered by the packaging ATPase in TerL, which continues until the next site is encountered at which point the motor stops and again cuts the DNA to release the nucleocapsid filled with a unit-length genome ('unit length' packaging). This chain is Terminase, large subunit (2), found in Escherichia coli (Bacteriophage HK97).